A 155-amino-acid polypeptide reads, in one-letter code: MTIEICKKLHVLIVEARFYDGISDALLTGAVSTLQKAEATYDIVTVPGALEIPGAIAFAEKNSKIYYDGYVALGCVIRGETYHFEIVANDSCRALMDLTIHKHLAIGNGILTVENEKQAWARAKQDEKNKGGFAAQAALCMIALKKRFGEIIKYG.

Residues Phe-18, 49-51, and 75-77 each bind 5-amino-6-(D-ribitylamino)uracil; these read ALE and CVI. (2S)-2-hydroxy-3-oxobutyl phosphate is bound at residue 80 to 81; that stretch reads ET. The Proton donor role is filled by His-83. Position 108 (Asn-108) interacts with 5-amino-6-(D-ribitylamino)uracil. Arg-122 contacts (2S)-2-hydroxy-3-oxobutyl phosphate.

This sequence belongs to the DMRL synthase family.

The enzyme catalyses (2S)-2-hydroxy-3-oxobutyl phosphate + 5-amino-6-(D-ribitylamino)uracil = 6,7-dimethyl-8-(1-D-ribityl)lumazine + phosphate + 2 H2O + H(+). The protein operates within cofactor biosynthesis; riboflavin biosynthesis; riboflavin from 2-hydroxy-3-oxobutyl phosphate and 5-amino-6-(D-ribitylamino)uracil: step 1/2. Functionally, catalyzes the formation of 6,7-dimethyl-8-ribityllumazine by condensation of 5-amino-6-(D-ribitylamino)uracil with 3,4-dihydroxy-2-butanone 4-phosphate. This is the penultimate step in the biosynthesis of riboflavin. This chain is 6,7-dimethyl-8-ribityllumazine synthase, found in Bartonella henselae (strain ATCC 49882 / DSM 28221 / CCUG 30454 / Houston 1) (Rochalimaea henselae).